We begin with the raw amino-acid sequence, 22 residues long: Plasticin-TR (22 aa).

It belongs to the frog skin active peptide (FSAP) family. Plasticin subfamily. In terms of assembly, exhibits a propensity to self-association and forms helical oligomers in membrane-mimetic environments. As to expression, expressed by the skin glands.

Its subcellular location is the secreted. The protein localises to the target cell membrane. Functionally, has no antimicrobial activity against Gram-negative bacterium E.coli ATCC 25922, Gram-positive bacterium S.epidermidis ATCC 12228 and against fungus C.albicans ATCC 24433 at concentrations up to 100 uM. Has an anti-inflammatory effect, since it inhibits the production of the pro-inflammatory cytokines TNF-alpha and IL-1 beta. Has high activity of stimulation of insulin release, which may protect the species from being eaten by predators by causing fatal hypoglycemia. Is not cytotoxic to cancer line cells. Does not show hemolysis on mouse erythrocytes. Adopts a mixture of alpha-helical and beta-sheet structures. In Phyllomedusa trinitatis (Trinidad leaf frog), this protein is Plasticin-TR.